The sequence spans 255 residues: Pimeloyl-[acyl-carrier protein] methyl ester esterase (255 aa).

An AB hydrolase-1 domain is found at 16-242 (LVLLHGWGMN…SSHAPFITEP (227 aa)). Residues Trp22, 82 to 83 (SL), and 143 to 147 (FMALQ) contribute to the substrate site. The active-site Nucleophile is the Ser82. Residues Asp207 and His235 contribute to the active site. His235 is a substrate binding site.

It belongs to the AB hydrolase superfamily. Carboxylesterase BioH family. Monomer.

It is found in the cytoplasm. It carries out the reaction 6-carboxyhexanoyl-[ACP] methyl ester + H2O = 6-carboxyhexanoyl-[ACP] + methanol + H(+). The protein operates within cofactor biosynthesis; biotin biosynthesis. Functionally, the physiological role of BioH is to remove the methyl group introduced by BioC when the pimeloyl moiety is complete. It allows to synthesize pimeloyl-ACP via the fatty acid synthetic pathway through the hydrolysis of the ester bonds of pimeloyl-ACP esters. This Vibrio vulnificus (strain CMCP6) protein is Pimeloyl-[acyl-carrier protein] methyl ester esterase.